Reading from the N-terminus, the 487-residue chain is 1-aminocyclopropane-1-carboxylate synthase 1 (487 aa).

At Lys-286 the chain carries N6-(pyridoxal phosphate)lysine.

This sequence belongs to the class-I pyridoxal-phosphate-dependent aminotransferase family. As to quaternary structure, homodimer. Requires pyridoxal 5'-phosphate as cofactor.

It catalyses the reaction S-adenosyl-L-methionine = 1-aminocyclopropane-1-carboxylate + S-methyl-5'-thioadenosine + H(+). The protein operates within alkene biosynthesis; ethylene biosynthesis via S-adenosyl-L-methionine; ethylene from S-adenosyl-L-methionine: step 1/2. Catalyzes the formation of 1-aminocyclopropane-1-carboxylate, a direct precursor of ethylene in higher plants. The polypeptide is 1-aminocyclopropane-1-carboxylate synthase 1 (ACC1) (Oryza sativa subsp. indica (Rice)).